A 515-amino-acid chain; its full sequence is Anthranilate synthase component 1 (515 aa).

Residues Thr40 and 291 to 293 (PYM) contribute to the L-tryptophan site. 328–329 (GT) contributes to the chorismate binding site. A Mg(2+)-binding site is contributed by Glu361. Chorismate contacts are provided by residues Tyr449, Arg469, 483–485 (GAG), and Gly485. Position 498 (Glu498) interacts with Mg(2+).

Belongs to the anthranilate synthase component I family. As to quaternary structure, heterotetramer consisting of two non-identical subunits: a beta subunit (TrpG) and a large alpha subunit (TrpE). Requires Mg(2+) as cofactor.

It carries out the reaction chorismate + L-glutamine = anthranilate + pyruvate + L-glutamate + H(+). It participates in amino-acid biosynthesis; L-tryptophan biosynthesis; L-tryptophan from chorismate: step 1/5. Its activity is regulated as follows. Feedback inhibited by tryptophan. Functionally, part of a heterotetrameric complex that catalyzes the two-step biosynthesis of anthranilate, an intermediate in the biosynthesis of L-tryptophan. In the first step, the glutamine-binding beta subunit (TrpG) of anthranilate synthase (AS) provides the glutamine amidotransferase activity which generates ammonia as a substrate that, along with chorismate, is used in the second step, catalyzed by the large alpha subunit of AS (TrpE) to produce anthranilate. In the absence of TrpG, TrpE can synthesize anthranilate directly from chorismate and high concentrations of ammonia. In Buchnera aphidicola subsp. Schizaphis graminum (strain Sg), this protein is Anthranilate synthase component 1 (trpE).